The primary structure comprises 463 residues: Adenosylhomocysteinase (463 aa).

The substrate site is built by Thr54, Asp128, and Glu189. Thr190–Thr192 serves as a coordination point for NAD(+). Substrate-binding residues include Lys219 and Asp223. NAD(+) contacts are provided by residues Asn224, Gly253 to Gly258, Glu276, Asn311, Ile332 to His334, and Asn377.

This sequence belongs to the adenosylhomocysteinase family. Requires NAD(+) as cofactor.

The protein localises to the cytoplasm. It catalyses the reaction S-adenosyl-L-homocysteine + H2O = L-homocysteine + adenosine. It functions in the pathway amino-acid biosynthesis; L-homocysteine biosynthesis; L-homocysteine from S-adenosyl-L-homocysteine: step 1/1. Its function is as follows. May play a key role in the regulation of the intracellular concentration of adenosylhomocysteine. The polypeptide is Adenosylhomocysteinase (Cereibacter sphaeroides (Rhodobacter sphaeroides)).